We begin with the raw amino-acid sequence, 162 residues long: EF-hand calcium-binding domain-containing protein 11 (162 aa).

3 consecutive EF-hand domains span residues 18–53 (SERRKWVKVFKACDEDNKGYLSREDFKVAIVMLFGY), 91–126 (LYRNEIRQIFTAFDVHYRGFLTLEDFKRAFSRVAPK), and 127–162 (LPARTVLEVFREADQDSDGHVSFRDFEYAMNHGQSK). Asp-140, Asp-142, Asp-144, His-146, and Asp-151 together coordinate Ca(2+).

The polypeptide is EF-hand calcium-binding domain-containing protein 11 (Efcab11) (Mus musculus (Mouse)).